We begin with the raw amino-acid sequence, 217 residues long: Methylthioribulose-1-phosphate dehydratase (217 aa).

The Zn(2+) site is built by His-106 and His-108.

It belongs to the aldolase class II family. MtnB subfamily. It depends on Zn(2+) as a cofactor.

It carries out the reaction 5-(methylsulfanyl)-D-ribulose 1-phosphate = 5-methylsulfanyl-2,3-dioxopentyl phosphate + H2O. The protein operates within amino-acid biosynthesis; L-methionine biosynthesis via salvage pathway; L-methionine from S-methyl-5-thio-alpha-D-ribose 1-phosphate: step 2/6. In terms of biological role, catalyzes the dehydration of methylthioribulose-1-phosphate (MTRu-1-P) into 2,3-diketo-5-methylthiopentyl-1-phosphate (DK-MTP-1-P). The polypeptide is Methylthioribulose-1-phosphate dehydratase (Xanthomonas euvesicatoria pv. vesicatoria (strain 85-10) (Xanthomonas campestris pv. vesicatoria)).